We begin with the raw amino-acid sequence, 948 residues long: Coatomer subunit beta-2 (948 aa).

6 HEAT repeats span residues Glu49–Lys87, Pro92–Thr126, Glu127–Gly164, Thr274–Arg311, Asp312–Ile349, and Glu391–Lys428.

As to quaternary structure, oligomeric complex that consists of at least the alpha, beta, beta', gamma, delta, epsilon and zeta subunits.

Its subcellular location is the cytoplasm. The protein localises to the golgi apparatus membrane. It is found in the cytoplasmic vesicle. It localises to the COPI-coated vesicle membrane. Functionally, the coatomer is a cytosolic protein complex that binds to dilysine motifs and reversibly associates with Golgi non-clathrin-coated vesicles, which further mediate biosynthetic protein transport from the ER, via the Golgi up to the trans Golgi network. Coatomer complex is required for budding from Golgi membranes, and is essential for the retrograde Golgi-to-ER transport of dilysine-tagged proteins. The sequence is that of Coatomer subunit beta-2 from Arabidopsis thaliana (Mouse-ear cress).